The chain runs to 178 residues: Protein SPEAR1 (178 aa).

Disordered stretches follow at residues 1-48 (MGST…QRGL) and 139-178 (HFLNEDPSSTTRRSKSLGSGIQHSGSSENQEVDLELRLSL). Positions 14 to 28 (SSPPSSSPTSSSSSP) are enriched in low complexity. The SPL signature appears at 46–54 (RGLGVAQLE). Over residues 144–167 (DPSSTTRRSKSLGSGIQHSGSSEN) the composition is skewed to polar residues. The EAR signature appears at 170 to 176 (VDLELRL).

As to quaternary structure, interacts with SPL and SPEAR2. In terms of tissue distribution, not detected in leaves.

In terms of biological role, adapter-like transcriptional repressor recruiting TPL/TPR corepressors to inhibit TCP transcription factors. The polypeptide is Protein SPEAR1 (Arabidopsis thaliana (Mouse-ear cress)).